A 130-amino-acid polypeptide reads, in one-letter code: Small ribosomal subunit protein uS9 (130 aa).

Belongs to the universal ribosomal protein uS9 family.

The chain is Small ribosomal subunit protein uS9 from Shewanella halifaxensis (strain HAW-EB4).